A 783-amino-acid chain; its full sequence is MRWQCGTRFRGLRPVVAPWTALLALGLPGWVLAVSATAAAVVPEQHASTAGQHPLDWLLTDRGPFHRAQEYADFMERYRQGFTTRYRIYREFARWKVNNLALERKDFFSLPLPLAPESIRNIRLLGRRPNLQQVTENLIKKYGTHFLLSATLGGEESLTIFVDKRKLGRKTETTGGASIIGGSGNSTAVSLETLHQLAASYFIDRESTLRRLHHIQIATGAIKVTETRTGPLGCSNYDNLDSVSSVLVQSPENKVQLLGLQVLLPEYLRERFVAAALSYITCSSEGELVCKENDCWCKCSPTFPDCNCPDADIQAMEDSLLQIQDSWATHNRQFEESEEFQALLKRLPDDRFLNSTAISQFWAMDTSLQHRYQQLGAGLKVLFKKTHRIVRRLFNLCKRCHRQPRFRLPKERSLSYWWNRIQSLLYCGESTFPGTFLEQSHSCTCPYDQSSCQGPIPCALGEGPACAHCAPDNSTRCGSCNPGYVLAQGLCRPEVAESLENFLGLETDLQDLELKYLLQKQDSRIEVHSIFISNDMRLGSWFDPSWRKRMLLTLKSNKYKPGLVHVMLALSLQICLTKNSTLEPVMAIYVNPFGGSHSESWFMPVNEGSFPDWERTNVDAAAQCQNWTITLGNRWKTFFETVHVYLRSRIKSLDDSSNETIYYEPLEMTDPSKNLGYMKINTLQVFGYSLPFDPDAIRDLILQLDYPYTQGSQDSALLQLIELRDRVNQLSPPGKVRLDLFSCLLRHRLKLANNEVGRIQSSLRAFNSKLPNPVEYETGKLCS.

The signal sequence occupies residues 1 to 33; it reads MRWQCGTRFRGLRPVVAPWTALLALGLPGWVLA. In terms of domain architecture, MACPF spans 85-281; the sequence is RYRIYREFAR…FVAAALSYIT (197 aa). N-linked (GlcNAc...) asparagine glycosylation is found at Asn-185, Asn-354, Asn-473, Asn-579, Asn-626, and Asn-658.

This sequence belongs to the BRINP family.

It localises to the secreted. Its function is as follows. Inhibits neuronal cell proliferation by negative regulation of the cell cycle transition. The chain is BMP/retinoic acid-inducible neural-specific protein 2 (BRINP2) from Pongo abelii (Sumatran orangutan).